A 118-amino-acid chain; its full sequence is Large ribosomal subunit protein bL20 (118 aa).

It belongs to the bacterial ribosomal protein bL20 family.

In terms of biological role, binds directly to 23S ribosomal RNA and is necessary for the in vitro assembly process of the 50S ribosomal subunit. It is not involved in the protein synthesizing functions of that subunit. In Desulfovibrio desulfuricans (strain ATCC 27774 / DSM 6949 / MB), this protein is Large ribosomal subunit protein bL20.